A 244-amino-acid chain; its full sequence is Mitophagy receptor atg43 (244 aa).

The interval 1–24 (MSSESKGIPIPRSDSNKTSDVSSW) is disordered. Topologically, residues 1-198 (MSSESKGIPI…LVALITLRDH (198 aa)) are cytoplasmic. The atg8 interacting motif (AIM) motif lies at 28–31 (YELI). Residues 105–131 (SLSLLQSKEEDDSSNWETEDSESAVEE) are disordered. Residues 113–131 (EEDDSSNWETEDSESAVEE) show a composition bias toward acidic residues. The interval 165–184 (PPIPDLRFQQSYLQSIQRAN) is involved in MIM complex binding. Required for normal vegetative cell population growth but is dispensable for mitophagy. A helical transmembrane segment spans residues 199–215 (VLYPFLSGGMWVFVRHI). At 216-244 (FQFLKLQEKGFHFGQSLRRNLGLFSTFKD) the chain is on the mitochondrial intermembrane side.

Interacts (via N-terminal atg8 interacting motif) with atg8; the interaction is direct. Interacts with the mitochondrial outer import machinery (MIM) complex subunits mim1 and mim2.

It is found in the mitochondrion outer membrane. Mitophagy receptor that tethers atg8 to the mitochondrial outer membrane to promote selective autophagy. The chain is Mitophagy receptor atg43 from Schizosaccharomyces pombe (strain 972 / ATCC 24843) (Fission yeast).